Reading from the N-terminus, the 296-residue chain is Enoyl-CoA hydratase AKT3-2 (296 aa).

Positions Pro294–Leu296 match the Peroxisomal targeting signal type 1 motif.

The protein belongs to the enoyl-CoA hydratase/isomerase family.

The protein localises to the peroxisome. It catalyses the reaction a (3S)-3-hydroxyacyl-CoA = a (2E)-enoyl-CoA + H2O. The catalysed reaction is a 4-saturated-(3S)-3-hydroxyacyl-CoA = a (3E)-enoyl-CoA + H2O. It functions in the pathway mycotoxin biosynthesis. Its function is as follows. Enoyl-CoA hydratase; part of the gene clusters that mediate the biosynthesis of the host-selective toxins (HSTs) AK-toxins responsible for Japanese pear black spot disease by the Japanese pear pathotype. AK-toxins are esters of 9,10-epoxy 8-hydroxy 9-methyldecatrienoic acid (EDA). On cellular level, AK-toxins affect plasma membrane of susceptible cells and cause a sudden increase in loss of K(+) after a few minutes of toxin treatment. The acyl-CoA ligase AKT1, the hydrolase AKT2 and enoyl-CoA hydratase AKT3 are all involved in the biosynthesis of the AK-, AF- and ACT-toxin common 9,10-epoxy-8-hydroxy-9-methyl-decatrienoic acid (EDA) structural moiety. Part of the EDA biosynthesis occurs in the peroxisome since these 3 enzymes are localized in peroxisomes. The exact roles of the 3 enzymes, as well as of additional AK-toxin clusters enzymes, including AKT4, AKT6 and AKTS1, have still to be elucidated. The Cytochrome P450 monooxygenase AKT7 on the other side functions to limit production of EDA and AK-toxin, probably via the catalysis of a side reaction of EDA or its precursor. The protein is Enoyl-CoA hydratase AKT3-2 of Alternaria alternata (Alternaria rot fungus).